The chain runs to 239 residues: Acyl-protein thioesterase 1 (239 aa).

Active-site charge relay system residues include Ser124, Asp180, and His213.

It belongs to the AB hydrolase superfamily. AB hydrolase 2 family.

The protein localises to the cytoplasm. It localises to the nucleus. The enzyme catalyses S-hexadecanoyl-L-cysteinyl-[protein] + H2O = L-cysteinyl-[protein] + hexadecanoate + H(+). Hydrolyzes fatty acids from S-acylated cysteine residues in proteins with a strong preference for palmitoylated G-alpha proteins over other acyl substrates. Mediates the deacylation of G-alpha proteins such as GPA1 in vivo, but has weak or no activity toward palmitoylated Ras proteins. Has weak lysophospholipase activity in vitro; however such activity may not exist in vivo. This is Acyl-protein thioesterase 1 from Emericella nidulans (strain FGSC A4 / ATCC 38163 / CBS 112.46 / NRRL 194 / M139) (Aspergillus nidulans).